A 316-amino-acid polypeptide reads, in one-letter code: Transcription termination/antitermination protein NusG (316 aa).

It belongs to the NusG family.

Participates in transcription elongation, termination and antitermination. The chain is Transcription termination/antitermination protein NusG from Mycoplasma genitalium (strain ATCC 33530 / DSM 19775 / NCTC 10195 / G37) (Mycoplasmoides genitalium).